We begin with the raw amino-acid sequence, 207 residues long: Protein-L-isoaspartate O-methyltransferase (207 aa).

S56 is a catalytic residue.

It belongs to the methyltransferase superfamily. L-isoaspartyl/D-aspartyl protein methyltransferase family.

It localises to the cytoplasm. The catalysed reaction is [protein]-L-isoaspartate + S-adenosyl-L-methionine = [protein]-L-isoaspartate alpha-methyl ester + S-adenosyl-L-homocysteine. Its function is as follows. Catalyzes the methyl esterification of L-isoaspartyl residues in peptides and proteins that result from spontaneous decomposition of normal L-aspartyl and L-asparaginyl residues. It plays a role in the repair and/or degradation of damaged proteins. This is Protein-L-isoaspartate O-methyltransferase from Pyrobaculum neutrophilum (strain DSM 2338 / JCM 9278 / NBRC 100436 / V24Sta) (Thermoproteus neutrophilus).